Consider the following 657-residue polypeptide: Threonine--tRNA ligase (657 aa).

Positions 1–61 constitute a TGS domain; sequence MINVTLPDGS…EGDASVAIIT (61 aa). A catalytic region spans residues 244–549; that stretch reads DHRKLGAQLD…LIENYAGSFP (306 aa). Zn(2+) is bound by residues C349, H400, and H526.

Belongs to the class-II aminoacyl-tRNA synthetase family. In terms of assembly, homodimer. Requires Zn(2+) as cofactor.

Its subcellular location is the cytoplasm. The catalysed reaction is tRNA(Thr) + L-threonine + ATP = L-threonyl-tRNA(Thr) + AMP + diphosphate + H(+). Functionally, catalyzes the attachment of threonine to tRNA(Thr) in a two-step reaction: L-threonine is first activated by ATP to form Thr-AMP and then transferred to the acceptor end of tRNA(Thr). Also edits incorrectly charged L-seryl-tRNA(Thr). The protein is Threonine--tRNA ligase of Hyphomonas neptunium (strain ATCC 15444).